The sequence spans 35 residues: Unknown protein 14 from 2D-PAGE (35 aa).

The interval 1-35 (VVXXQTLXDXRGIYGDQGSIGPXXIXGLQGDRDAD) is disordered.

The protein is Unknown protein 14 from 2D-PAGE of Bombyx mori (Silk moth).